The chain runs to 149 residues: Tetracenomycin polyketide synthase protein TcmJ (149 aa).

Positions 51–117 (HIELAPGESV…NRGNVPARVV (67 aa)) constitute a Cupin type-2 domain. The disordered stretch occupies residues 127-149 (PELGHVDTEPVPNPAAAPPKVGG).

In terms of assembly, the tetracenomycin polyketide synthase (TCM PKS) is composed of a ketosynthase complex (TcmKL), an acyl carrier protein (TcmM), a cyclase (TcmN) and a probable second cyclase (TcmJ).

It carries out the reaction 10 malonyl-CoA + 8 H(+) = tetracenomycin F2 + 10 CO2 + 10 CoA + 2 H2O. It participates in antibiotic biosynthesis; tetracenomycin C biosynthesis. Functionally, involved in the biosynthesis of tetracenomycin C (TCM C). Part of a type II polyketide synthase (PKS) that catalyzes the synthesis of tetracenomycin F2 (TCM F2), a precursor of TCM C, from malonyl-CoA. TcmJ, while not absolutely required, greatly increases the tetracenomycin F2 production. It probably acts as a cyclase. This is Tetracenomycin polyketide synthase protein TcmJ from Streptomyces glaucescens.